The following is a 391-amino-acid chain: S-adenosylmethionine synthase (391 aa).

His16 is a binding site for ATP. Asp18 contacts Mg(2+). A K(+)-binding site is contributed by Glu44. Glu57 and Gln101 together coordinate L-methionine. Positions 101 to 111 are flexible loop; it reads QSADIAQGVDA. ATP is bound by residues 166-168, Asp244, 250-251, Ala267, and Lys271; these read DAK and RK. Asp244 serves as a coordination point for L-methionine. Lys275 is an L-methionine binding site.

The protein belongs to the AdoMet synthase family. In terms of assembly, homotetramer; dimer of dimers. Mg(2+) serves as cofactor. Requires K(+) as cofactor.

It localises to the cytoplasm. It carries out the reaction L-methionine + ATP + H2O = S-adenosyl-L-methionine + phosphate + diphosphate. It participates in amino-acid biosynthesis; S-adenosyl-L-methionine biosynthesis; S-adenosyl-L-methionine from L-methionine: step 1/1. Catalyzes the formation of S-adenosylmethionine (AdoMet) from methionine and ATP. The overall synthetic reaction is composed of two sequential steps, AdoMet formation and the subsequent tripolyphosphate hydrolysis which occurs prior to release of AdoMet from the enzyme. The polypeptide is S-adenosylmethionine synthase (Zymomonas mobilis subsp. mobilis (strain ATCC 31821 / ZM4 / CP4)).